A 342-amino-acid chain; its full sequence is Protein FinQ (342 aa).

The H-T-H motif DNA-binding region spans 208 to 227 (RDREFNLLNAQISMVLYICS).

Functionally, transcriptional inhibitor of the F plasmid transfer genes. FinQ may regulate a gene or genes encoded on the IncI plasmids, and coincidentally may inhibit F transfer when coresident. The sequence is that of Protein FinQ (finQ) from Escherichia coli.